The sequence spans 118 residues: MYKRSDKVAEAIHELVSGLLVKGLKDPRIGFVTITGVKVSDDIRHATIYYTVMGSDEAKKSTLHGLNSSVGFIRKEVSKELRLRFAPELIFKYDESIEYGNRIDQLLKEIGSEEGGND.

Belongs to the RbfA family. As to quaternary structure, monomer. Binds 30S ribosomal subunits, but not 50S ribosomal subunits or 70S ribosomes.

It is found in the cytoplasm. Functionally, one of several proteins that assist in the late maturation steps of the functional core of the 30S ribosomal subunit. Associates with free 30S ribosomal subunits (but not with 30S subunits that are part of 70S ribosomes or polysomes). Required for efficient processing of 16S rRNA. May interact with the 5'-terminal helix region of 16S rRNA. The sequence is that of Ribosome-binding factor A from Geobacter metallireducens (strain ATCC 53774 / DSM 7210 / GS-15).